The following is a 513-amino-acid chain: GMP synthase [glutamine-hydrolyzing] (513 aa).

The region spanning 7 to 198 (LIVVVDFGGQ…LFNIAGCRGD (192 aa)) is the Glutamine amidotransferase type-1 domain. The active-site Nucleophile is the Cys84. Catalysis depends on residues His172 and Glu174. One can recognise a GMPS ATP-PPase domain in the interval 199 to 388 (WTTESFITRQ…LGVPEEIVGR (190 aa)). An ATP-binding site is contributed by 226 to 232 (SGGVDSS).

As to quaternary structure, homodimer.

It carries out the reaction XMP + L-glutamine + ATP + H2O = GMP + L-glutamate + AMP + diphosphate + 2 H(+). It functions in the pathway purine metabolism; GMP biosynthesis; GMP from XMP (L-Gln route): step 1/1. In terms of biological role, catalyzes the synthesis of GMP from XMP. This chain is GMP synthase [glutamine-hydrolyzing], found in Symbiobacterium thermophilum (strain DSM 24528 / JCM 14929 / IAM 14863 / T).